Reading from the N-terminus, the 413-residue chain is PAB1-binding protein 2 (413 aa).

Positions 1–23 are enriched in low complexity; the sequence is MSTETTKPSITTTPTTVLVSPNT. Residues 1-36 are disordered; the sequence is MSTETTKPSITTTPTTVLVSPNTLKRKKGEDTSEEQ. KH domains lie at 66-130, 148-213, and 330-394; these read DVHL…YGMI, EISI…TFYI, and FVQQ…IMLI.

In terms of assembly, interacts with PAB1.

Its subcellular location is the nucleus. In Saccharomyces cerevisiae (strain ATCC 204508 / S288c) (Baker's yeast), this protein is PAB1-binding protein 2 (PBP2).